The sequence spans 118 residues: Large ribosomal subunit protein bL20c (118 aa).

It belongs to the bacterial ribosomal protein bL20 family.

The protein localises to the plastid. It is found in the chloroplast. Functionally, binds directly to 23S ribosomal RNA and is necessary for the in vitro assembly process of the 50S ribosomal subunit. It is not involved in the protein synthesizing functions of that subunit. The polypeptide is Large ribosomal subunit protein bL20c (Gracilaria tenuistipitata var. liui (Red alga)).